A 345-amino-acid polypeptide reads, in one-letter code: Ferrochelatase (345 aa).

2 residues coordinate Fe cation: His215 and Glu296.

Belongs to the ferrochelatase family.

Its subcellular location is the cytoplasm. It catalyses the reaction heme b + 2 H(+) = protoporphyrin IX + Fe(2+). It participates in porphyrin-containing compound metabolism; protoheme biosynthesis; protoheme from protoporphyrin-IX: step 1/1. In terms of biological role, catalyzes the ferrous insertion into protoporphyrin IX. The polypeptide is Ferrochelatase (Rhodopseudomonas palustris (strain BisA53)).